The primary structure comprises 379 residues: Succinyl-diaminopimelate desuccinylase (379 aa).

A Zn(2+)-binding site is contributed by histidine 70. The active site involves aspartate 72. Aspartate 103 lines the Zn(2+) pocket. The active-site Proton acceptor is the glutamate 137. Zn(2+) is bound by residues glutamate 138, glutamate 166, and histidine 352.

This sequence belongs to the peptidase M20A family. DapE subfamily. Homodimer. It depends on Zn(2+) as a cofactor. Requires Co(2+) as cofactor.

It catalyses the reaction N-succinyl-(2S,6S)-2,6-diaminopimelate + H2O = (2S,6S)-2,6-diaminopimelate + succinate. Its pathway is amino-acid biosynthesis; L-lysine biosynthesis via DAP pathway; LL-2,6-diaminopimelate from (S)-tetrahydrodipicolinate (succinylase route): step 3/3. Functionally, catalyzes the hydrolysis of N-succinyl-L,L-diaminopimelic acid (SDAP), forming succinate and LL-2,6-diaminopimelate (DAP), an intermediate involved in the bacterial biosynthesis of lysine and meso-diaminopimelic acid, an essential component of bacterial cell walls. The chain is Succinyl-diaminopimelate desuccinylase from Shewanella baltica (strain OS223).